The chain runs to 157 residues: MSNIILDLQLACADLQGLPAEGDFLRWLEAVLPRFRDEAEVTIRLVDEAESHELNLTYRGKDRPTNVLSFPFEAPPGIELPLLGDMVICRQVVEREAQEQNISQLSHWAHMVVHGSLHLLGYDHISDEEAEEMESLEAEIMQVLGYPDPYAAEKESD.

Residues histidine 114, histidine 118, and histidine 124 each coordinate Zn(2+).

It belongs to the endoribonuclease YbeY family. Zn(2+) is required as a cofactor.

The protein resides in the cytoplasm. Single strand-specific metallo-endoribonuclease involved in late-stage 70S ribosome quality control and in maturation of the 3' terminus of the 16S rRNA. This is Endoribonuclease YbeY from Edwardsiella ictaluri (strain 93-146).